The sequence spans 296 residues: Putative F-box protein At1g67623 (296 aa).

Residues 21–70 (SLCLDSLPEDLLVEISSCTGASSLSAVRNLRLVSKSFRRICDEKYVFYRL) form the F-box domain.

This chain is Putative F-box protein At1g67623, found in Arabidopsis thaliana (Mouse-ear cress).